The primary structure comprises 141 residues: Nucleoside triphosphatase NudI (141 aa).

The 141-residue stretch at 1–141 folds into the Nudix hydrolase domain; sequence MRQRTIVCPI…RLTFTQKGLL (141 aa). The Nudix box motif lies at 38–59; that stretch reads GGMEPGETMEEALRREIREELG.

Belongs to the Nudix hydrolase family. NudI subfamily. Monomer. Mg(2+) is required as a cofactor.

The catalysed reaction is a ribonucleoside 5'-triphosphate + H2O = a ribonucleoside 5'-phosphate + diphosphate + H(+). The enzyme catalyses a 2'-deoxyribonucleoside 5'-triphosphate + H2O = a 2'-deoxyribonucleoside 5'-phosphate + diphosphate + H(+). It carries out the reaction dUTP + H2O = dUMP + diphosphate + H(+). It catalyses the reaction dTTP + H2O = dTMP + diphosphate + H(+). The catalysed reaction is dCTP + H2O = dCMP + diphosphate + H(+). Functionally, catalyzes the hydrolysis of nucleoside triphosphates, with a preference for pyrimidine deoxynucleoside triphosphates (dUTP, dTTP and dCTP). The protein is Nucleoside triphosphatase NudI of Enterobacter sp. (strain 638).